The following is a 177-amino-acid chain: Phycoerythrin beta subunit (177 aa).

Residues Tyr18, Lys28, Asn35, and Asp39 each coordinate (2R,3E)-phycocyanobilin. 15,16-dihydrobiliverdin contacts are provided by Cys50, Asp54, and Cys61. Residues Arg77, Cys82, Arg84, and Asp85 each contribute to the (2R,3E)-phycocyanobilin site. 15,16-dihydrobiliverdin-binding residues include Arg129, Gln148, and Lys149. (2R,3E)-phycocyanobilin contacts are provided by Pro154, Gly156, and Cys158.

The protein belongs to the phycobiliprotein family. Heterotetramer of 2 identical alpha chains and 2 identical beta chains which form 2 alpha-beta heterodimers within the heterotetramer. The two alpha-beta heterodimers are rotated to an open configuration in contrast to the closed configuration found in other cryptophyte species due to the insertion of a single amino acid, 'Asp-65', in a conserved region of the alpha chain. In the open form, the central chromophores are not in physical contact but are separated by a water-filled channel. Contains three phycocyanobilin chromophores and one 15,16-dihydrobiliverdin chromophore with binding of the phycocyanobilin chromophores mediated by both the alpha and beta subunits.

The protein localises to the plastid. Its subcellular location is the chloroplast thylakoid membrane. Its function is as follows. Light-harvesting photosynthetic bile pigment-protein from the phycobiliprotein complex. The protein is Phycoerythrin beta subunit of Hemiselmis virescens.